The chain runs to 236 residues: H2HPP isomerase (236 aa).

Cupin type-2 domains are found at residues 40–106 (YVPP…AIDI) and 151–215 (NIPG…SKSV). Residues H50, H52, Q56, H91, H162, H164, Q168, and H202 each contribute to the a divalent metal cation site. Residue Y223 participates in substrate binding.

Monomer. The cofactor is Fe(2+). Requires Co(2+) as cofactor.

It localises to the cytoplasm. The enzyme catalyses 3-[(4R)-4-hydroxycyclohexa-1,5-dien-1-yl]-2-oxopropanoate = 3-[(1E,4R)-4-hydroxycyclohex-2-en-1-ylidene]pyruvate. It functions in the pathway antibiotic biosynthesis; bacilysin biosynthesis. Its function is as follows. Part of the bacABCDEF operon responsible for the biosynthesis of the nonribosomally synthesized dipeptide antibiotic bacilysin, composed of L-alanine and L-anticapsin. Bacilysin is an irreversible inactivator of the glutaminase domain of glucosamine synthetase. BacB catalyzes the allylic isomerization of the endocyclic-delta(4),delta(8)-7R-dihydro-hydroxyphenylpyruvate (en-H2HPP) to generate a mixture of 3E,7R- and 3Z, 7R-olefins of the exocyclic-delta(3),delta(5)-dihydro-hydroxyphenylpyruvate (ex-H2HPP). The sequence is that of H2HPP isomerase from Bacillus amyloliquefaciens (Bacillus velezensis).